A 534-amino-acid polypeptide reads, in one-letter code: Cytochrome P450 monooxygenase btcB (534 aa).

N-linked (GlcNAc...) asparagine glycosylation is present at Asn20. The helical transmembrane segment at 41–61 (ALAFLCGALLFGFVYSVFYNL) threads the bilayer. 3 N-linked (GlcNAc...) asparagine glycosylation sites follow: Asn335, Asn413, and Asn431. Cys484 serves as a coordination point for heme.

It belongs to the cytochrome P450 family. Requires heme as cofactor.

Its subcellular location is the membrane. Its pathway is secondary metabolite biosynthesis; terpenoid biosynthesis. Cytochrome P4590 monooxygenase part of the gene cluster that mediates the biosynthesis of betaestacins. The bifunctional terpene synthase btcA converts isopentenyl diphosphate (IPP) and dimethylallyl diphosphate (DMAPP) into the sesterterpene betaestacin I. The C-terminal prenyltransferase (PT) domain of btcA catalyzes formation of GFPP, whereas the N-terminal terpene cyclase (TC) domain catalyzes the cyclization of GFPP into betaestacin I. The cytochrome P450 monooxygenase btcB oxidizes the C25 methyl group of betaestacin I to yield the carboxylic acid betaestacin IV via the alcohol betaestacin III. The cytochrome P450 monooxygenase btcC further catalyzes the multistep oxidation of betaestacin IV to produce several compounds, including betaestacins Va, Vb, Vc and VI. This chain is Cytochrome P450 monooxygenase btcB, found in Colletotrichum orbiculare (strain 104-T / ATCC 96160 / CBS 514.97 / LARS 414 / MAFF 240422) (Cucumber anthracnose fungus).